Consider the following 683-residue polypeptide: DNA ligase (683 aa).

Residues 35–39 (DAEYD), 81–82 (SL), and Glu112 contribute to the NAD(+) site. Lys114 serves as the catalytic N6-AMP-lysine intermediate. The NAD(+) site is built by Arg135, Glu170, Lys277, and Lys301. Cys395, Cys398, Cys411, and Cys417 together coordinate Zn(2+). One can recognise a BRCT domain in the interval 601 to 683 (SSNSVLNNKV…YRMINSEVSE (83 aa)).

This sequence belongs to the NAD-dependent DNA ligase family. LigA subfamily. It depends on Mg(2+) as a cofactor. Mn(2+) serves as cofactor.

The catalysed reaction is NAD(+) + (deoxyribonucleotide)n-3'-hydroxyl + 5'-phospho-(deoxyribonucleotide)m = (deoxyribonucleotide)n+m + AMP + beta-nicotinamide D-nucleotide.. DNA ligase that catalyzes the formation of phosphodiester linkages between 5'-phosphoryl and 3'-hydroxyl groups in double-stranded DNA using NAD as a coenzyme and as the energy source for the reaction. It is essential for DNA replication and repair of damaged DNA. The protein is DNA ligase of Wolbachia sp. subsp. Brugia malayi (strain TRS).